A 450-amino-acid polypeptide reads, in one-letter code: Phosphoglucosamine mutase (450 aa).

The Phosphoserine intermediate role is filled by Ser100. Positions 100, 240, 242, and 244 each coordinate Mg(2+). Ser100 carries the phosphoserine modification.

It belongs to the phosphohexose mutase family. Mg(2+) serves as cofactor. Activated by phosphorylation.

The catalysed reaction is alpha-D-glucosamine 1-phosphate = D-glucosamine 6-phosphate. Catalyzes the conversion of glucosamine-6-phosphate to glucosamine-1-phosphate. The chain is Phosphoglucosamine mutase from Desulforudis audaxviator (strain MP104C).